Consider the following 274-residue polypeptide: Protein STAY-GREEN, chloroplastic (274 aa).

A chloroplast-targeting transit peptide spans 1 to 48 (MAAATSTMSLLPPITQQQRWHAADSLVVLASRCHNSRRRRRCRYVVPR).

It belongs to the staygreen family. In terms of assembly, interacts with LHCII complex. In terms of tissue distribution, expressed in leaves, roots and developing seeds.

It is found in the plastid. Its subcellular location is the chloroplast membrane. The protein localises to the chloroplast stroma. Involved in the disassembling mechanism of the intact light-harvesting complex of photosystem II (LHCII) in the thylakoid membranes. Required to trigger chlorophyll degradation during natural and dark-induced leaf senescence. The chain is Protein STAY-GREEN, chloroplastic (SGR) from Oryza sativa subsp. japonica (Rice).